The chain runs to 500 residues: Lysine--tRNA ligase (500 aa).

2 residues coordinate Mg(2+): E410 and E417.

It belongs to the class-II aminoacyl-tRNA synthetase family. As to quaternary structure, homodimer. Requires Mg(2+) as cofactor.

The protein resides in the cytoplasm. The catalysed reaction is tRNA(Lys) + L-lysine + ATP = L-lysyl-tRNA(Lys) + AMP + diphosphate. The protein is Lysine--tRNA ligase of Shewanella oneidensis (strain ATCC 700550 / JCM 31522 / CIP 106686 / LMG 19005 / NCIMB 14063 / MR-1).